Here is a 207-residue protein sequence, read N- to C-terminus: Large ribosomal subunit protein bL25 (207 aa).

The disordered stretch occupies residues 186-207; that stretch reads SKPRGGAGAEGEADAEGEAAAE. Positions 196–207 are enriched in acidic residues; that stretch reads GEADAEGEAAAE.

The protein belongs to the bacterial ribosomal protein bL25 family. CTC subfamily. As to quaternary structure, part of the 50S ribosomal subunit; part of the 5S rRNA/L5/L18/L25 subcomplex. Contacts the 5S rRNA. Binds to the 5S rRNA independently of L5 and L18.

Functionally, this is one of the proteins that binds to the 5S RNA in the ribosome where it forms part of the central protuberance. This chain is Large ribosomal subunit protein bL25, found in Methylobacillus flagellatus (strain ATCC 51484 / DSM 6875 / VKM B-1610 / KT).